A 508-amino-acid chain; its full sequence is Photosystem II CP47 reaction center protein (508 aa).

The next 6 membrane-spanning stretches (helical) occupy residues 21-36, 101-115, 140-156, 203-218, 237-252, and 457-472; these read SVHIMHTALVSGWAGS, IVFSGLCFLAAIWHW, GIHLFLSGVACFGFGAF, IAAGTLGILAGLFHLS, VLSSSIAAVFFAAFVV, and SFALLFFFGHIWHGAR.

It belongs to the PsbB/PsbC family. PsbB subfamily. PSII is composed of 1 copy each of membrane proteins PsbA, PsbB, PsbC, PsbD, PsbE, PsbF, PsbH, PsbI, PsbJ, PsbK, PsbL, PsbM, PsbT, PsbX, PsbY, PsbZ, Psb30/Ycf12, at least 3 peripheral proteins of the oxygen-evolving complex and a large number of cofactors. It forms dimeric complexes. Requires Binds multiple chlorophylls. PSII binds additional chlorophylls, carotenoids and specific lipids. as cofactor.

The protein localises to the plastid. It is found in the chloroplast thylakoid membrane. Functionally, one of the components of the core complex of photosystem II (PSII). It binds chlorophyll and helps catalyze the primary light-induced photochemical processes of PSII. PSII is a light-driven water:plastoquinone oxidoreductase, using light energy to abstract electrons from H(2)O, generating O(2) and a proton gradient subsequently used for ATP formation. This chain is Photosystem II CP47 reaction center protein, found in Illicium oligandrum (Star anise).